A 124-amino-acid chain; its full sequence is CBS domain-containing protein MJ0729 (124 aa).

2 CBS domains span residues 10–67 and 70–124; these read MNKD…IEDL and LIDE…YKNR.

As to quaternary structure, exhibits a pH-dependent oligomerization state: at pH 7, the dominant species is a dimer, where each monomer is a two-CBS domain protein, and at pH 4.5-4.8, the dominant species is a tetramer, with an oblong shape. At pH 2.5, there is formation of intermolecular hydrogen bonds, suggesting the presence of high-molecular weight species. The physiological dimeric species is thermal and chemically very stable.

In Methanocaldococcus jannaschii (strain ATCC 43067 / DSM 2661 / JAL-1 / JCM 10045 / NBRC 100440) (Methanococcus jannaschii), this protein is CBS domain-containing protein MJ0729.